The following is a 315-amino-acid chain: Lipoyl synthase (315 aa).

[4Fe-4S] cluster-binding residues include Cys63, Cys68, Cys74, Cys89, Cys93, Cys96, and Ser303. Residues 75–292 enclose the Radical SAM core domain; the sequence is FSKGTATFMI…EEKAYEMGFV (218 aa).

It belongs to the radical SAM superfamily. Lipoyl synthase family. [4Fe-4S] cluster serves as cofactor.

It is found in the cytoplasm. The catalysed reaction is [[Fe-S] cluster scaffold protein carrying a second [4Fe-4S](2+) cluster] + N(6)-octanoyl-L-lysyl-[protein] + 2 oxidized [2Fe-2S]-[ferredoxin] + 2 S-adenosyl-L-methionine + 4 H(+) = [[Fe-S] cluster scaffold protein] + N(6)-[(R)-dihydrolipoyl]-L-lysyl-[protein] + 4 Fe(3+) + 2 hydrogen sulfide + 2 5'-deoxyadenosine + 2 L-methionine + 2 reduced [2Fe-2S]-[ferredoxin]. It participates in protein modification; protein lipoylation via endogenous pathway; protein N(6)-(lipoyl)lysine from octanoyl-[acyl-carrier-protein]: step 2/2. Functionally, catalyzes the radical-mediated insertion of two sulfur atoms into the C-6 and C-8 positions of the octanoyl moiety bound to the lipoyl domains of lipoate-dependent enzymes, thereby converting the octanoylated domains into lipoylated derivatives. The chain is Lipoyl synthase from Chromobacterium violaceum (strain ATCC 12472 / DSM 30191 / JCM 1249 / CCUG 213 / NBRC 12614 / NCIMB 9131 / NCTC 9757 / MK).